The following is a 586-amino-acid chain: Envelope glycoprotein (586 aa).

The first 22 residues, 1–22, serve as a signal peptide directing secretion; sequence MNFNYHFIWSLVILSQISQVQA. Residues 23–526 lie on the Extracellular side of the membrane; the sequence is GFGDPREALA…TSFHGFLPYV (504 aa). Asn-120 and Asn-237 each carry an N-linked (GlcNAc...) asparagine; by host glycan. The CXXC motif lies at 247–250; that stretch reads CWLC. Intrachain disulfides connect Cys-247–Cys-250, Cys-247–Cys-483, and Cys-475–Cys-482. 8 N-linked (GlcNAc...) asparagine; by host glycosylation sites follow: Asn-264, Asn-276, Asn-291, Asn-304, Asn-318, Asn-324, Asn-339, and Asn-357. Residues 398–418 are fusion peptide; the sequence is LIPLFVGLGITTAVSTGAAGL. 2 coiled-coil regions span residues 419 to 469 and 479 to 515; these read GVSI…LLTA and QEKC…DNPF. Residues 458–474 are immunosuppression; the sequence is LQNRRGLDLLTAEQGGI. Positions 475-483 match the CX6CC motif; it reads CLALQEKCC. Asn-487 carries N-linked (GlcNAc...) asparagine; by host glycosylation. Residues 527 to 547 traverse the membrane as a helical segment; the sequence is MPLLGPLLCLLLVLSFGPIIF. The Cytoplasmic portion of the chain corresponds to 548–586; sequence NKLMTFIKHQIESIQAKPIQVHYHRLEQEDSGGSYLTLT. Residues 570–573 carry the YXXL motif; contains endocytosis signal motif; the sequence is YHRL.

The mature envelope protein (Env) consists of a trimer of SU-TM heterodimers attached by a labile interchain disulfide bond. In terms of processing, specific enzymatic cleavages in vivo yield mature proteins. Envelope glycoproteins are synthesized as an inactive precursor that is N-glycosylated and processed likely by host cell furin or by a furin-like protease in the Golgi to yield the mature SU and TM proteins. The cleavage site between SU and TM requires the minimal sequence [KR]-X-[KR]-R. The R-peptide is released from the C-terminus of the cytoplasmic tail of the TM protein upon particle formation as a result of proteolytic cleavage by the viral protease. Cleavage of this peptide is required for TM to become fusogenic. Post-translationally, the CXXC motif is highly conserved across a broad range of retroviral envelope proteins. It is thought to participate in the formation of a labile disulfide bond possibly with the CX6CC motif present in the transmembrane protein. Isomerization of the intersubunit disulfide bond to an SU intrachain disulfide bond is thought to occur upon receptor recognition in order to allow membrane fusion.

Its subcellular location is the virion membrane. It is found in the host cell membrane. The surface protein (SU) attaches the virus to the host cell by binding to its receptor. This interaction triggers the refolding of the transmembrane protein (TM) and is thought to activate its fusogenic potential by unmasking its fusion peptide. Fusion occurs at the host cell plasma membrane. In terms of biological role, the transmembrane protein (TM) acts as a class I viral fusion protein. Under the current model, the protein has at least 3 conformational states: pre-fusion native state, pre-hairpin intermediate state, and post-fusion hairpin state. During viral and target cell membrane fusion, the coiled coil regions (heptad repeats) assume a trimer-of-hairpins structure, positioning the fusion peptide in close proximity to the C-terminal region of the ectodomain. The formation of this structure appears to drive apposition and subsequent fusion of viral and target cell membranes. Membranes fusion leads to delivery of the nucleocapsid into the cytoplasm. The sequence is that of Envelope glycoprotein (env) from Mason-Pfizer monkey virus (MPMV).